Consider the following 209-residue polypeptide: ATP-dependent Clp protease proteolytic subunit (209 aa).

Catalysis depends on Ser-107, which acts as the Nucleophile. His-132 is a catalytic residue.

Belongs to the peptidase S14 family. In terms of assembly, fourteen ClpP subunits assemble into 2 heptameric rings which stack back to back to give a disk-like structure with a central cavity, resembling the structure of eukaryotic proteasomes.

It is found in the cytoplasm. The catalysed reaction is Hydrolysis of proteins to small peptides in the presence of ATP and magnesium. alpha-casein is the usual test substrate. In the absence of ATP, only oligopeptides shorter than five residues are hydrolyzed (such as succinyl-Leu-Tyr-|-NHMec, and Leu-Tyr-Leu-|-Tyr-Trp, in which cleavage of the -Tyr-|-Leu- and -Tyr-|-Trp bonds also occurs).. Cleaves peptides in various proteins in a process that requires ATP hydrolysis. Has a chymotrypsin-like activity. Plays a major role in the degradation of misfolded proteins. This chain is ATP-dependent Clp protease proteolytic subunit, found in Ruegeria pomeroyi (strain ATCC 700808 / DSM 15171 / DSS-3) (Silicibacter pomeroyi).